Reading from the N-terminus, the 129-residue chain is UPF0102 protein CT2262 (129 aa).

Belongs to the UPF0102 family.

The polypeptide is UPF0102 protein CT2262 (Chlorobaculum tepidum (strain ATCC 49652 / DSM 12025 / NBRC 103806 / TLS) (Chlorobium tepidum)).